We begin with the raw amino-acid sequence, 236 residues long: C-&gt;U-editing enzyme APOBEC-1 (236 aa).

One can recognise a CMP/dCMP-type deaminase domain in the interval 10–134; the sequence is GDPTLRRRIE…QQNRQGLRDL (125 aa). His-61 contributes to the Zn(2+) binding site. The active-site Proton donor is the Glu-63. The Zn(2+) site is built by Cys-93 and Cys-96.

Belongs to the cytidine and deoxycytidylate deaminase family. In terms of assembly, homodimer. Interacts with A1CF; form an mRNA editing complex. Interacts with RBM47; form an mRNA editing complex. Found in a complex with CELF2/CUGBP2 and A1CF. Interacts with HNRPAB. Interacts with SYNCRIP. Requires Zn(2+) as cofactor. In terms of tissue distribution, expressed exclusively in the small intestine.

Its subcellular location is the cytoplasm. It localises to the nucleus. It carries out the reaction a cytidine in mRNA + H2O + H(+) = a uridine in mRNA + NH4(+). The enzyme catalyses cytidine(6666) in apoB mRNA + H2O + H(+) = uridine(6666) in apoB mRNA + NH4(+). In terms of biological role, cytidine deaminase catalyzing the cytidine to uridine postranscriptional editing of a variety of mRNAs. Form complexes with cofactors that confer differential editing activity and selectivity. Responsible for the postranscriptional editing of a CAA codon for Gln to a UAA codon for stop in the apolipoprotein B mRNA. Also involved in CGA (Arg) to UGA (Stop) editing in the NF1 mRNA. May also play a role in the epigenetic regulation of gene expression by participating in DNA demethylation. The protein is C-&gt;U-editing enzyme APOBEC-1 of Homo sapiens (Human).